The primary structure comprises 134 residues: Large ribosomal subunit protein bL17 (134 aa).

Belongs to the bacterial ribosomal protein bL17 family. As to quaternary structure, part of the 50S ribosomal subunit. Contacts protein L32.

The sequence is that of Large ribosomal subunit protein bL17 from Colwellia psychrerythraea (strain 34H / ATCC BAA-681) (Vibrio psychroerythus).